A 765-amino-acid chain; its full sequence is Carboxysome assembly protein CsoS2 (765 aa).

Positions 1–22 (MSTKTSREIALERRKAMSDGGK) are enriched in basic and acidic residues. 2 disordered regions span residues 1–107 (MSTK…RTDV) and 165–229 (REAQ…NKNG). Positions 1-215 (MSTKTSREIA…RSKTGSTSKQ (215 aa)) are N-terminal domain. Residues 7 to 22 (REIALERRKAMSDGGK) form an N-repeat 1 repeat. The span at 38 to 63 (SQDINSTGATSSNKKVLTSPSKSNIP) shows a compositional bias: polar residues. The segment covering 77-87 (SSKELGIERRK) has biased composition (basic and acidic residues). 3 N-repeat repeats span residues 79-94 (KELG…THGK), 158-173 (RDIV…KHGK), and 196-211 (REIS…KTGS). The segment covering 187-207 (RRGDPDLSSREISQRVRELRS) has biased composition (basic and acidic residues). The tract at residues 216 to 586 (GNGKCRPCGP…LSNCETPPND (371 aa)) is middle region. M-repeat repeat units lie at residues 240 to 289 (KVGK…GQFC), 300 to 349 (RASV…KKYC), 358 to 397 (KVMQ…GDQY), 411 to 460 (KVGS…EKFC), 470 to 519 (KVGL…NDNC), and 530 to 580 (RATV…LSNC). 2 disordered regions span residues 306 to 328 (TTSG…GDEP) and 367 to 413 (GLKV…EKVG). A C-terminal domain region spans residues 589–734 (YANQEKSASN…AMPPVDNKRN (146 aa)). C-repeat repeat units lie at residues 604–648 (SVNS…GTEQ) and 677–711 (KKEP…EGVS). Disordered stretches follow at residues 611–637 (EKYS…GPFD) and 656–765 (NMTY…GARG). Residues 730-741 (DNKRNDETEKPD) show a composition bias toward basic and acidic residues. A C-terminal peptide region spans residues 735-765 (DETEKPDFLITGSSGNTRDGQLVTFSGGARG).

Belongs to the CsoS2 family. As to quaternary structure, probably interacts with the carboxysome major shell protein CsoS1 via the N-terminal domain. A CsoS1-CsoS1D-CsoS2 complex can be isolated following expression in E.coli. Interacts via its N-terminal repeats with RuBisCO. Post-translationally, unlike H.neapolitanus and predictions for P.marinus strain MIT 9313, this protein is not thought to have ribosomal frameshifting.

The protein localises to the carboxysome. Functionally, required for alpha-carboxysome (Cb) assembly, mediates interaction between RuBisCO and the Cb shell. The protein is probably highly flexible. The C-terminal repeats act as the encapsulation signal to target proteins to the Cb; they are necessary and sufficient to target both CsoS2 and foreign proteins to the Cb. The N-terminal repeats of this protein bind simultaneously to both subunits of RuBisCO. Probably also interacts with the major shell proteins (CsoS1); that interaction would increase the local concentration of CsoS2 so that it can condense RuBisCO and full carboxysomes can be formed. There are estimated to be 163 CsoS2 proteins per carboxysome; unlike H.neapolitanus only 1 form is seen. The protein is Carboxysome assembly protein CsoS2 of Prochlorococcus marinus subsp. pastoris (strain CCMP1986 / NIES-2087 / MED4).